The following is a 506-amino-acid chain: Maturase K (506 aa).

This sequence belongs to the intron maturase 2 family. MatK subfamily.

It is found in the plastid. Its subcellular location is the chloroplast. Its function is as follows. Usually encoded in the trnK tRNA gene intron. Probably assists in splicing its own and other chloroplast group II introns. The protein is Maturase K of Lathyrus tingitanus (Tangier pea).